The primary structure comprises 284 residues: Bifunctional protein FolD (284 aa).

NADP(+) contacts are provided by residues 165–167 (GRS) and S190.

It belongs to the tetrahydrofolate dehydrogenase/cyclohydrolase family. In terms of assembly, homodimer.

The enzyme catalyses (6R)-5,10-methylene-5,6,7,8-tetrahydrofolate + NADP(+) = (6R)-5,10-methenyltetrahydrofolate + NADPH. It carries out the reaction (6R)-5,10-methenyltetrahydrofolate + H2O = (6R)-10-formyltetrahydrofolate + H(+). Its pathway is one-carbon metabolism; tetrahydrofolate interconversion. Its function is as follows. Catalyzes the oxidation of 5,10-methylenetetrahydrofolate to 5,10-methenyltetrahydrofolate and then the hydrolysis of 5,10-methenyltetrahydrofolate to 10-formyltetrahydrofolate. This is Bifunctional protein FolD from Streptococcus pyogenes serotype M2 (strain MGAS10270).